Here is a 432-residue protein sequence, read N- to C-terminus: GRAM domain-containing protein 2B (432 aa).

Met-1 bears the N-acetylmethionine mark. 2 disordered regions span residues 1–61 (MTEL…SPDQ) and 74–106 (DGASLASDKNDCKTESKNDPKTERKKSSSSSQY). Basic and acidic residues-rich tracts occupy residues 9–39 (EDTKPAKVLGKRESKLGSAHSEAENGVEEKK) and 81–99 (DKNDCKTESKNDPKTERKK). Residues 110–177 (MHFHKLFLSV…FSVTLIKKTK (68 aa)) form the GRAM domain. The segment covering 220 to 233 (TSVGNSPNPSSAEN) has biased composition (polar residues). Residues 220 to 239 (TSVGNSPNPSSAENSFRADR) form a disordered region. Phosphoserine is present on residues Ser-225, Ser-242, and Ser-252. The interval 262–285 (RQDMEGYSSSGSQTPESENSRDFH) is disordered. Positions 268–278 (YSSSGSQTPES) are enriched in polar residues.

The polypeptide is GRAM domain-containing protein 2B (GRAMD2B) (Homo sapiens (Human)).